A 265-amino-acid polypeptide reads, in one-letter code: RING finger protein 208 (265 aa).

The segment at 83–106 (MPTLEGASHTPPLPRRPRKGSSEL) is disordered. The residue at position 103 (Ser-103) is a Phosphoserine. Residues 147–194 (CPTCGHTYNVTQRRPRVLSCLHSVCEQCLQILYESCPKYKFISCPTCH) form an RING-type zinc finger.

The protein is RING finger protein 208 (Rnf208) of Mus musculus (Mouse).